Here is a 389-residue protein sequence, read N- to C-terminus: Putative DNA processing protein DprA (389 aa).

Belongs to the DprA/Smf family.

May help load RecA onto ssDNA. The chain is Putative DNA processing protein DprA from Mycobacterium tuberculosis (strain CDC 1551 / Oshkosh).